A 145-amino-acid polypeptide reads, in one-letter code: 6-pyruvoyl tetrahydrobiopterin synthase (145 aa).

The residue at position 19 (S19) is a Phosphoserine; by PKG. Residue H24 participates in Zn(2+) binding. Residue S28 is modified to Phosphoserine. Residue C43 is the Proton acceptor of the active site. Zn(2+) is bound by residues H49 and H51. H90 serves as the catalytic Charge relay system. Position 128 is a phosphotyrosine (Y128). The active-site Charge relay system is E134.

This sequence belongs to the PTPS family. Homohexamer formed of two homotrimers in a head to head fashion. Zn(2+) is required as a cofactor. Phosphorylation of Ser-19 is required for maximal enzyme activity.

The catalysed reaction is 7,8-dihydroneopterin 3'-triphosphate = 6-pyruvoyl-5,6,7,8-tetrahydropterin + triphosphate + H(+). It functions in the pathway cofactor biosynthesis; tetrahydrobiopterin biosynthesis; tetrahydrobiopterin from 7,8-dihydroneopterin triphosphate: step 1/3. Involved in the biosynthesis of tetrahydrobiopterin, an essential cofactor of aromatic amino acid hydroxylases. Catalyzes the transformation of 7,8-dihydroneopterin triphosphate into 6-pyruvoyl tetrahydropterin. This chain is 6-pyruvoyl tetrahydrobiopterin synthase (PTS), found in Homo sapiens (Human).